Here is a 278-residue protein sequence, read N- to C-terminus: Urease accessory protein UreD (278 aa).

Belongs to the UreD family. As to quaternary structure, ureD, UreF and UreG form a complex that acts as a GTP-hydrolysis-dependent molecular chaperone, activating the urease apoprotein by helping to assemble the nickel containing metallocenter of UreC. The UreE protein probably delivers the nickel.

It localises to the cytoplasm. Functionally, required for maturation of urease via the functional incorporation of the urease nickel metallocenter. This is Urease accessory protein UreD from Pseudomonas putida (strain ATCC 700007 / DSM 6899 / JCM 31910 / BCRC 17059 / LMG 24140 / F1).